Reading from the N-terminus, the 150-residue chain is Large ribosomal subunit protein bL9 (150 aa).

Belongs to the bacterial ribosomal protein bL9 family.

In terms of biological role, binds to the 23S rRNA. The protein is Large ribosomal subunit protein bL9 of Shewanella halifaxensis (strain HAW-EB4).